The chain runs to 400 residues: NADH-quinone oxidoreductase subunit D (400 aa).

The protein belongs to the complex I 49 kDa subunit family. As to quaternary structure, NDH-1 is composed of 14 different subunits. Subunits NuoB, C, D, E, F, and G constitute the peripheral sector of the complex.

It is found in the cell inner membrane. The enzyme catalyses a quinone + NADH + 5 H(+)(in) = a quinol + NAD(+) + 4 H(+)(out). Functionally, NDH-1 shuttles electrons from NADH, via FMN and iron-sulfur (Fe-S) centers, to quinones in the respiratory chain. The immediate electron acceptor for the enzyme in this species is believed to be a menaquinone. Couples the redox reaction to proton translocation (for every two electrons transferred, four hydrogen ions are translocated across the cytoplasmic membrane), and thus conserves the redox energy in a proton gradient. This is NADH-quinone oxidoreductase subunit D from Chlorobium phaeobacteroides (strain DSM 266 / SMG 266 / 2430).